Reading from the N-terminus, the 546-residue chain is Smad protein daf-8 (546 aa).

The 122-residue stretch at 16–137 (AMAQKVLEET…YRWVELPTCQ (122 aa)) folds into the MH1 domain. 2 disordered regions span residues 234–268 (LQQS…FIPN) and 292–317 (ENFS…PIEP). Polar residues predominate over residues 292 to 302 (ENFSSENNGNR). An MH2 domain is found at 349–546 (WLKLIYYEEG…APPRICSSRT (198 aa)).

It belongs to the dwarfin/SMAD family. In terms of assembly, homodimer. Interacts with R-SMAD daf-14 and co-SMAD daf-3. Interacts with orphan nuclear receptor nhr-69. Expressed in the excretory cell and gonadal distal tip cells (DTCs).

The protein localises to the cytoplasm. Its subcellular location is the nucleus. Probably a receptor-regulated SMAD (R-SMAD) that is an intracellular signal transducer and transcriptional modulator activated by TGF-beta-like daf-7 signaling. Plays a role in TGF-beta-like daf-7 signaling in regulating entry into a developmentally arrested larval state known as dauer, in response to harsh environmental conditions; partially redundant with R-SMAD daf-14. Plays a role in inhibiting mitosis and promoting a switch to meiosis in the germ line, perhaps by down-regulating lag-2 transcription in the gonadal distal tip cells (DTCs). In cooperation with orphan nuclear receptor nhr-69 modulates the Insulin/IGF-1-like signaling (IIS) pathway, perhaps by regulating expression of the potassium channel exp-2, which in turn modulates the secretion of the insulin-like peptide daf-28. This is Smad protein daf-8 from Caenorhabditis elegans.